The chain runs to 367 residues: Glutamate 5-kinase (367 aa).

K9 contributes to the ATP binding site. Substrate contacts are provided by S49, D136, and N148. Residues 168 to 169 (TD) and 210 to 216 (TGGMKSK) each bind ATP. Residues 276 to 350 (SGQIEIDAGA…GMQSQQIQAR (75 aa)) form the PUA domain.

Belongs to the glutamate 5-kinase family.

It localises to the cytoplasm. It carries out the reaction L-glutamate + ATP = L-glutamyl 5-phosphate + ADP. The protein operates within amino-acid biosynthesis; L-proline biosynthesis; L-glutamate 5-semialdehyde from L-glutamate: step 1/2. Catalyzes the transfer of a phosphate group to glutamate to form L-glutamate 5-phosphate. The sequence is that of Glutamate 5-kinase from Bacillus anthracis.